We begin with the raw amino-acid sequence, 886 residues long: Conserved oligomeric Golgi complex subunit 1 (886 aa).

The span at 834–846 (SAERKSPIQEPVE) shows a compositional bias: basic and acidic residues. Residues 834-886 (SAERKSPIQEPVEKTATTTPTRKSGGNGARKGDSSKSKSSAASFFGMSQEWFR) are disordered. At serine 839 the chain carries Phosphoserine. Positions 848–857 (TATTTPTRKS) are enriched in polar residues.

Belongs to the COG1 family. In terms of assembly, component of the conserved oligomeric Golgi complex which is composed of eight different subunits and is required for normal Golgi morphology and localization.

The protein resides in the golgi apparatus membrane. In terms of biological role, required for normal Golgi function. The protein is Conserved oligomeric Golgi complex subunit 1 of Drosophila melanogaster (Fruit fly).